Reading from the N-terminus, the 335-residue chain is Methionine import ATP-binding protein MetN 1 (335 aa).

The 241-residue stretch at 2–242 folds into the ABC transporter domain; it reads IEFHNVHKTY…PQHPTTRRFV (241 aa). 38-45 is an ATP binding site; that stretch reads GHSGAGKS.

This sequence belongs to the ABC transporter superfamily. Methionine importer (TC 3.A.1.24) family. In terms of assembly, the complex is composed of two ATP-binding proteins (MetN), two transmembrane proteins (MetI) and a solute-binding protein (MetQ).

The protein localises to the cell inner membrane. The catalysed reaction is L-methionine(out) + ATP + H2O = L-methionine(in) + ADP + phosphate + H(+). The enzyme catalyses D-methionine(out) + ATP + H2O = D-methionine(in) + ADP + phosphate + H(+). In terms of biological role, part of the ABC transporter complex MetNIQ involved in methionine import. Responsible for energy coupling to the transport system. The sequence is that of Methionine import ATP-binding protein MetN 1 from Pseudomonas savastanoi pv. phaseolicola (strain 1448A / Race 6) (Pseudomonas syringae pv. phaseolicola (strain 1448A / Race 6)).